We begin with the raw amino-acid sequence, 388 residues long: UDP-galactose transporter senju (388 aa).

The next 10 helical transmembrane spans lie at 13 to 33, 46 to 66, 84 to 104, 113 to 133, 142 to 162, 202 to 222, 236 to 256, 276 to 296, 309 to 329, and 331 to 351; these read LTFV…IFVT, TVTV…CLYC, VLGL…LAFV, TYYL…QIIF, WISL…FGSF, FSLS…AGVY, IFVQ…VILL, FSVL…SFFL, ALEL…PIYM, and TALA…SPVV.

It belongs to the nucleotide-sugar transporter family.

It is found in the golgi apparatus membrane. Functionally, UDP-galactose transporter involved in the synthesis of galactose-containing glycans. Plays a role in quiescence of the innate immune response, possibly by regulating glycosylation of the Toll pathway ligand spz. This Drosophila melanogaster (Fruit fly) protein is UDP-galactose transporter senju.